The following is a 154-amino-acid chain: Ribonuclease 8 (154 aa).

An N-terminal signal peptide occupies residues 1-27 (MAPARAGCCALLLLLLGLWVAEIPVSA). Histidine 42 (proton acceptor) is an active-site residue. Cystine bridges form between cysteine 64-cysteine 118, cysteine 82-cysteine 133, and cysteine 89-cysteine 96. Substrate is bound by residues 65–69 (KDLNT) and lysine 90. Histidine 149 acts as the Proton donor in catalysis.

This sequence belongs to the pancreatic ribonuclease family.

The protein resides in the secreted. Its function is as follows. Has a low ribonuclease activity. This Pongo pygmaeus (Bornean orangutan) protein is Ribonuclease 8 (RNASE8).